Consider the following 164-residue polypeptide: Transcription elongation factor GreA (164 aa).

Positions 12 to 38 (RRLERELERLKKERPGVILAIKEAREE) form a coiled coil.

This sequence belongs to the GreA/GreB family.

Its function is as follows. Necessary for efficient RNA polymerase transcription elongation past template-encoded arresting sites. The arresting sites in DNA have the property of trapping a certain fraction of elongating RNA polymerases that pass through, resulting in locked ternary complexes. Cleavage of the nascent transcript by cleavage factors such as GreA or GreB allows the resumption of elongation from the new 3'terminus. GreA releases sequences of 2 to 3 nucleotides. This Solidesulfovibrio magneticus (strain ATCC 700980 / DSM 13731 / RS-1) (Desulfovibrio magneticus) protein is Transcription elongation factor GreA.